Consider the following 98-residue polypeptide: MSAKAEHYDVIRKPIITEKSTMASENGAVVFEVAIDSNKPQIKEAVEALFGVKVKAVNTTVTKGKVKRFRGQLGKRKDVKKAYVTLEEGNTIDVSTGL.

It belongs to the universal ribosomal protein uL23 family. Part of the 50S ribosomal subunit. Contacts protein L29, and trigger factor when it is bound to the ribosome.

One of the early assembly proteins it binds 23S rRNA. One of the proteins that surrounds the polypeptide exit tunnel on the outside of the ribosome. Forms the main docking site for trigger factor binding to the ribosome. In Ruegeria sp. (strain TM1040) (Silicibacter sp.), this protein is Large ribosomal subunit protein uL23.